The chain runs to 340 residues: Heat-inducible transcription repressor HrcA (340 aa).

Belongs to the HrcA family.

In terms of biological role, negative regulator of class I heat shock genes (grpE-dnaK-dnaJ and groELS operons). Prevents heat-shock induction of these operons. This is Heat-inducible transcription repressor HrcA from Burkholderia mallei (strain NCTC 10247).